We begin with the raw amino-acid sequence, 86 residues long: Testis-expressed protein 54 (86 aa).

Residues 1 to 34 (MGCCQDKNRWASDEQARDEVTEDGREGNEVDNSG) are compositionally biased toward basic and acidic residues. Disordered stretches follow at residues 1–43 (MGCC…SNES) and 57–86 (SRRESSRSGKQDNQMQERKHEGSHKEPEKG).

As to expression, expressed in Testis.

This chain is Testis-expressed protein 54, found in Mus musculus (Mouse).